The sequence spans 251 residues: uncharacterized protein (251 aa).

7 consecutive transmembrane segments (helical) span residues 48 to 68, 88 to 108, 110 to 130, 132 to 152, 158 to 178, 184 to 204, and 209 to 229; these read WMVG…VELI, VLWG…LVAN, IPLL…FIWV, AMVW…GSSF, IGVS…GLFV, IIGC…MPVL, and GVSW…AYLL.

The protein to M.tuberculosis Rv1337.

It is found in the cell membrane. This is an uncharacterized protein from Mycobacterium leprae (strain TN).